We begin with the raw amino-acid sequence, 155 residues long: MKCPFCQHDDTQVLDTRVSEEGDSIRRRRRCTSCDKRFTTYERIELTMPVVVKKNGSRTDFDPKKLQGSLQLALRKRPVSAEAVDAAIHRIEQKLLSSGEREVISGQIGELVMRELQRLDKIAYIRFASVYKSFEDVAEFQDAIAEVGRERKPAK.

A zinc finger spans residues 3–34 (CPFCQHDDTQVLDTRVSEEGDSIRRRRRCTSC). Residues 49 to 139 (PVVVKKNGSR…VYKSFEDVAE (91 aa)) form the ATP-cone domain.

It belongs to the NrdR family. Zn(2+) serves as cofactor.

Negatively regulates transcription of bacterial ribonucleotide reductase nrd genes and operons by binding to NrdR-boxes. The protein is Transcriptional repressor NrdR of Janthinobacterium sp. (strain Marseille) (Minibacterium massiliensis).